The sequence spans 427 residues: A-kinase anchor protein 5 (427 aa).

Positions 1-122 (METTISEIHV…DADLSKKKAK (122 aa)) are disordered. The interval 1–170 (METTISEIHV…LDIQTQTPLN (170 aa)) is essential to the intracellular anchoring function. Residues 8–19 (IHVENKDEKRSA) show a composition bias toward basic and acidic residues. Ser22 bears the Phosphoserine mark. The S-palmitoyl cysteine moiety is linked to residue Cys36. Over residues 37-48 (FKRRKKAAKALK) the composition is skewed to basic residues. Residues 76–96 (RGAWASLKRLVTRRKRSESSK) carry the AKAP CaM-binding motif. Over residues 92–102 (SESSKQQKPLE) the composition is skewed to basic and acidic residues. A lipid anchor (S-palmitoyl cysteine) is attached at Cys129. Composition is skewed to polar residues over residues 171 to 182 (DQATKAKSTQDL) and 242 to 252 (VQPQQASPLET). Disordered stretches follow at residues 171–205 (DQAT…STTS), 239–269 (KQDV…PPLP), and 281–333 (SNST…EESK). Residues 302 to 333 (EETKPKDTELSQESDFKENGITEEKSKSEESK) are compositionally biased toward basic and acidic residues. The segment at 392–405 (LIETASSLVKNAIQ) is PKA-RII subunit binding domain. Residues 410–427 (QLVNEMASDDNKINNLLQ) are tethers NFATC2 to CRAC channels.

Binding protein for dimer of the RII-beta regulatory subunit of cAMP-dependent protein kinase (PKA) and also for the protein kinase C (PKC) and the phosphatase calcineurin (PP2B). Each enzyme is inhibited when bound to the anchoring protein. Also binds the beta2-adrenergic receptor. Part of a complex containing AKAP5, ADCY5, ADCY6 and PDE4C. Interacts with ADCY8, and enhances its phosphorylation at lipid rafts. Interacts with ORAI1 (isoform alpha) (via N-terminus) upon store depletion and in response to LTC4. Does not interact with ORAI2 and ORAI3 paralogs. Interacts (via leucine zipper domain) with NFATC2/NFAT1. Interacts with calmodulin; the interaction is calcium-independent. Interacts with KCNQ2; the interaction may help KCNQ2 channel complex to retain calcium-bound calmodulin. Interacts with KCNK2; the channel is recruited to postsynaptic microdomains by AKAP5 where it can integrate neurotransmitter receptor signals. Part of a complex composed of AKAP5 and ADRB2. Palmitoylated. Palmitoylation at Cys-36 and Cys-129 play a key role in the targeting of AKAP5 to lipid rafts. Palmitoylation by ZDHHC2 is required for AKAP5 function in LTP-stimulated recycling endosome exocytosis. In terms of tissue distribution, predominantly in the cerebral cortex and the postsynaptic densities of the forebrain, and to a lesser extent in adrenal medulla, lung and anterior pituitary.

It localises to the postsynaptic recycling endosome membrane. It is found in the cell projection. Its subcellular location is the dendrite. The protein localises to the postsynaptic cell membrane. Multivalent scaffold protein that anchors the cAMP-dependent protein kinase/PKA to cytoskeletal and/or organelle-associated proteins, targeting the signal carried by cAMP to specific intracellular effectors. Association with the beta2-adrenergic receptor (beta2-AR) not only regulates beta2-AR signaling pathway, but also the activation by PKA by switching off the beta2-AR signaling cascade. Plays a role in long term synaptic potentiation by regulating protein trafficking from the dendritic recycling endosomes to the plasma membrane and controlling both structural and functional plasticity at excitatory synapses. In hippocampal pyramidal neurons, recruits KCNK2/TREK-1 channel at postsynaptic dense bodies microdomains and converts it to a leak channel no longer sensitive to stimulation by arachidonic acid, acidic pH or mechanical stress, nor inhibited by Gq-coupled receptors but still under the negative control of Gs-coupled receptors. Associates with ORAI1 pore-forming subunit of CRAC channels in Ca(2+) signaling microdomains where it recruits NFATC2/NFAT1 and couples store-operated Ca(2+) influx to calmodulin and calcineurin signaling and activation of NFAT-dependent transcriptional responses. In Homo sapiens (Human), this protein is A-kinase anchor protein 5 (AKAP5).